The sequence spans 605 residues: LysM domain receptor-like kinase 10 (605 aa).

Residues 1-20 (MFSLPALLIGACAFAAAAVA) form the signal peptide. The Extracellular segment spans residues 21–245 (ASGDGCRAGC…GMGNSLSGGA (225 aa)). 3 disulfide bridges follow: cysteine 26–cysteine 89, cysteine 30–cysteine 161, and cysteine 87–cysteine 159. Asparagine 44 carries an N-linked (GlcNAc...) asparagine glycan. Residues 115 to 121 (GGDTYDA) and 142 to 148 (PPGRIPG) contribute to the chitin site. N-linked (GlcNAc...) asparagine glycans are attached at residues asparagine 154 and asparagine 158. One can recognise a LysM domain in the interval 174-221 (LTYPLWDGETLESVAAQYGFSSPAEMELIRRYNPGMGGVSGKGIVFIP). N-linked (GlcNAc...) asparagine glycosylation is present at asparagine 226. Residues 246–266 (IAGIVIACIAIFIVAIWLIIM) traverse the membrane as a helical segment. Residues 267 to 605 (FYRWQKFRKA…DLRDMDYHPF (339 aa)) are Cytoplasmic-facing. Phosphoserine is present on serine 278. Residues 317 to 591 (FSMEHKIGQG…RSVVVALMAL (275 aa)) enclose the Protein kinase domain. ATP contacts are provided by residues 323-331 (IGQGGFGSV) and lysine 344. Residue aspartate 436 is the Proton acceptor of the active site.

It belongs to the protein kinase superfamily. Ser/Thr protein kinase family.

The protein resides in the cell membrane. The catalysed reaction is L-seryl-[protein] + ATP = O-phospho-L-seryl-[protein] + ADP + H(+). It carries out the reaction L-threonyl-[protein] + ATP = O-phospho-L-threonyl-[protein] + ADP + H(+). This Oryza sativa subsp. japonica (Rice) protein is LysM domain receptor-like kinase 10.